The sequence spans 387 residues: Protein kinase gsk3 (387 aa).

The 285-residue stretch at Tyr-32–Phe-316 folds into the Protein kinase domain. ATP-binding positions include Val-38 to Val-46 and Lys-61. Catalysis depends on Asp-157, which acts as the Proton acceptor. Position 191 is a phosphoserine (Ser-191). Tyr-192 is subject to Phosphotyrosine; by autocatalysis. Ser-335 is modified (phosphoserine).

This sequence belongs to the protein kinase superfamily. CMGC Ser/Thr protein kinase family. GSK-3 subfamily. In terms of processing, autophosphorylated on tyrosine residues.

Its subcellular location is the cytoplasm. The protein resides in the nucleus. It catalyses the reaction L-seryl-[protein] + ATP = O-phospho-L-seryl-[protein] + ADP + H(+). It carries out the reaction L-threonyl-[protein] + ATP = O-phospho-L-threonyl-[protein] + ADP + H(+). Interacts with cdc14 which is thought to play a role in the initiation and completion of mitosis. Involved in the positive regulation of mis12. The chain is Protein kinase gsk3 (gsk3) from Schizosaccharomyces pombe (strain 972 / ATCC 24843) (Fission yeast).